We begin with the raw amino-acid sequence, 571 residues long: Proline--tRNA ligase (571 aa).

Belongs to the class-II aminoacyl-tRNA synthetase family. ProS type 1 subfamily. In terms of assembly, homodimer.

It localises to the cytoplasm. The catalysed reaction is tRNA(Pro) + L-proline + ATP = L-prolyl-tRNA(Pro) + AMP + diphosphate. Catalyzes the attachment of proline to tRNA(Pro) in a two-step reaction: proline is first activated by ATP to form Pro-AMP and then transferred to the acceptor end of tRNA(Pro). As ProRS can inadvertently accommodate and process non-cognate amino acids such as alanine and cysteine, to avoid such errors it has two additional distinct editing activities against alanine. One activity is designated as 'pretransfer' editing and involves the tRNA(Pro)-independent hydrolysis of activated Ala-AMP. The other activity is designated 'posttransfer' editing and involves deacylation of mischarged Ala-tRNA(Pro). The misacylated Cys-tRNA(Pro) is not edited by ProRS. This is Proline--tRNA ligase from Leuconostoc citreum (strain KM20).